Consider the following 262-residue polypeptide: 3-methyl-2-oxobutanoate hydroxymethyltransferase (262 aa).

2 residues coordinate Mg(2+): Asp-44 and Asp-83. Residues 44 to 45, Asp-83, and Lys-112 each bind 3-methyl-2-oxobutanoate; that span reads DS. Glu-114 is a Mg(2+) binding site. Glu-177 functions as the Proton acceptor in the catalytic mechanism.

It belongs to the PanB family. In terms of assembly, homodecamer; pentamer of dimers. Mg(2+) is required as a cofactor.

The protein resides in the cytoplasm. The enzyme catalyses 3-methyl-2-oxobutanoate + (6R)-5,10-methylene-5,6,7,8-tetrahydrofolate + H2O = 2-dehydropantoate + (6S)-5,6,7,8-tetrahydrofolate. Its pathway is cofactor biosynthesis; coenzyme A biosynthesis. Its function is as follows. Catalyzes the reversible reaction in which hydroxymethyl group from 5,10-methylenetetrahydrofolate is transferred onto alpha-ketoisovalerate to form ketopantoate. The chain is 3-methyl-2-oxobutanoate hydroxymethyltransferase from Metallosphaera sedula (strain ATCC 51363 / DSM 5348 / JCM 9185 / NBRC 15509 / TH2).